We begin with the raw amino-acid sequence, 174 residues long: uncharacterized protein (174 aa).

The protein belongs to the IIV-6 196R family.

This is an uncharacterized protein from Acheta domesticus (House cricket).